We begin with the raw amino-acid sequence, 471 residues long: Ribulose bisphosphate carboxylase large chain (471 aa).

Substrate is bound by residues N115 and T165. Catalysis depends on K167, which acts as the Proton acceptor. K169 is a substrate binding site. Mg(2+) contacts are provided by K193, D195, and E196. K193 carries the post-translational modification N6-carboxylysine. Residue H286 is the Proton acceptor of the active site. 3 residues coordinate substrate: R287, H319, and S371.

The protein belongs to the RuBisCO large chain family. Type I subfamily. Heterohexadecamer of 8 large chains and 8 small chains. It depends on Mg(2+) as a cofactor.

The enzyme catalyses 2 (2R)-3-phosphoglycerate + 2 H(+) = D-ribulose 1,5-bisphosphate + CO2 + H2O. It catalyses the reaction D-ribulose 1,5-bisphosphate + O2 = 2-phosphoglycolate + (2R)-3-phosphoglycerate + 2 H(+). Functionally, ruBisCO catalyzes two reactions: the carboxylation of D-ribulose 1,5-bisphosphate, the primary event in carbon dioxide fixation, as well as the oxidative fragmentation of the pentose substrate. Both reactions occur simultaneously and in competition at the same active site. This is Ribulose bisphosphate carboxylase large chain from Alvinoconcha hessleri symbiotic bacterium.